A 293-amino-acid polypeptide reads, in one-letter code: MATISAKLVKELREKTGAGMMDCKKALTETDGDIDKAIDYLREKGIAKAAKKADRIAAEGLVHVETKGNDAVIVEINSETDFVARNEGFQELVKEIANQVLDTKAETVEALMETTLPNGKSVDERIKEAISTIGEKLSVRRFAIRTKTDNDAFGAYLHMGGRIGVLTVVEGSTDEEAARDVAMHIAAINPKYVSSEQVSEEEINHEREVLKQQALNEGKPENIVEKMVEGRLRKYLQEICAVDQDFVKNPDVTVEAFLKTKGGKLVDFVRYEVGEGMEKREENFADEVKGQMK.

The tract at residues 80-83 (TDFV) is involved in Mg(2+) ion dislocation from EF-Tu.

Belongs to the EF-Ts family.

Its subcellular location is the cytoplasm. In terms of biological role, associates with the EF-Tu.GDP complex and induces the exchange of GDP to GTP. It remains bound to the aminoacyl-tRNA.EF-Tu.GTP complex up to the GTP hydrolysis stage on the ribosome. The chain is Elongation factor Ts from Staphylococcus aureus (strain USA300).